The primary structure comprises 306 residues: Pantothenate kinase (306 aa).

An ATP-binding site is contributed by 91 to 98 (GSVAVGKS).

The protein belongs to the prokaryotic pantothenate kinase family.

The protein resides in the cytoplasm. The enzyme catalyses (R)-pantothenate + ATP = (R)-4'-phosphopantothenate + ADP + H(+). The protein operates within cofactor biosynthesis; coenzyme A biosynthesis; CoA from (R)-pantothenate: step 1/5. The chain is Pantothenate kinase (coaA) from Streptococcus pyogenes serotype M1.